We begin with the raw amino-acid sequence, 418 residues long: MTEETHPDDDSYIVRVKAVVMTRDDSSGGWFPQEGGGISRVGVCKVMHPEGNGRSGFLIHGERQKDKLVVLECYVRKDLVYTKANPTFHHWKVDNRKFGLTFQSPADARAFDRGVRKAIEDLIEGSTTSSSTIHNEAELGDDDVFTTATDSSSNSSQKREQPTRTVSSPTSCEHRRIYTLGHLHDSYPTDHYHLDQPMPRPYRQVSFPDDDEEIVRINPREKIWMTGYEDYRHAPVRGKYPDPSEDVDSSYVRFAKGEVPKHDYNYPYVDSSDFGLGEDPKGRGGSVIKTQPSRGKSRRRKEDGERSRCVYCRDMFNHEENRRGHCQDAPDSVRTCIRRVSCMWCADSMLYHCMSDPEGDYTDPCSCDTSDEKFCLRWMALIALSFLAPCMCCYLPLRACYHCGVMCRCCGGKHKAAA.

The WH1 domain maps to 5 to 122 (THPDDDSYIV…RGVRKAIEDL (118 aa)). Positions 127–172 (TTSSSTIHNEAELGDDDVFTTATDSSSNSSQKREQPTRTVSSPTSC) are disordered. Polar residues predominate over residues 146 to 156 (TTATDSSSNSS). Residues 201 to 257 (PYRQVSFPDDDEEIVRINPREKIWMTGYEDYRHAPVRGKYPDPSEDVDSSYVRFAKG) form the KBD domain. S206 is modified (phosphoserine). Residues Y228 and Y231 each carry the phosphotyrosine modification. Residues 275–302 (GLGEDPKGRGGSVIKTQPSRGKSRRRKE) are disordered. In terms of domain architecture, SPR spans 308–416 (RCVYCRDMFN…CRCCGGKHKA (109 aa)).

In terms of assembly, homodimer and heterodimer. Able to interact with SPRED1 to form heterodimers. Interacts with RAS. May interact with ZDHHC13 (via ANK repeats) and ZDHHC17 (via ANK repeats). Interacts with TESK1. Interacts with NF1. Phosphorylated on serine and threonine residues. Phosphorylated on tyrosine. Phosphorylation of Tyr-228 and Tyr-231 are required for ubiquitination. Post-translationally, ubiquitinated; leading to degradation by the proteasome.

It localises to the cell membrane. Its subcellular location is the cytoplasmic vesicle. It is found in the secretory vesicle membrane. The protein localises to the cytoplasm. Negatively regulates Ras signaling pathways and downstream activation of MAP kinases. Recruits and translocates NF1 to the cell membrane, thereby enabling NF1-dependent hydrolysis of active GTP-bound Ras to inactive GDP-bound Ras. Inhibits fibroblast growth factor (FGF)-induced retinal lens fiber differentiation, probably by inhibiting FGF-mediated phosphorylation of ERK1/2. Inhibits TGFB-induced epithelial-to-mesenchymal transition in lens epithelial cells. This chain is Sprouty-related, EVH1 domain-containing protein 2 (SPRED2), found in Pongo abelii (Sumatran orangutan).